The following is a 236-amino-acid chain: Small ribosomal subunit protein uS3 (236 aa).

A KH type-2 domain is found at 39–107 (IREILHKELK…DVVINIVEIR (69 aa)). A disordered region spans residues 213 to 236 (MAQDKRMNEGGGESSQPRSRRDAA).

The protein belongs to the universal ribosomal protein uS3 family. As to quaternary structure, part of the 30S ribosomal subunit. Forms a tight complex with proteins S10 and S14.

Functionally, binds the lower part of the 30S subunit head. Binds mRNA in the 70S ribosome, positioning it for translation. The polypeptide is Small ribosomal subunit protein uS3 (Bradyrhizobium sp. (strain BTAi1 / ATCC BAA-1182)).